The following is a 199-amino-acid chain: Imidazole glycerol phosphate synthase subunit HisH (199 aa).

The region spanning 2-199 is the Glutamine amidotransferase type-1 domain; it reads RAVIIDYGVG…LTNVYRWLRK (198 aa). Cysteine 76 functions as the Nucleophile in the catalytic mechanism. Catalysis depends on residues histidine 178 and glutamate 180.

In terms of assembly, heterodimer of HisH and HisF.

Its subcellular location is the cytoplasm. The catalysed reaction is 5-[(5-phospho-1-deoxy-D-ribulos-1-ylimino)methylamino]-1-(5-phospho-beta-D-ribosyl)imidazole-4-carboxamide + L-glutamine = D-erythro-1-(imidazol-4-yl)glycerol 3-phosphate + 5-amino-1-(5-phospho-beta-D-ribosyl)imidazole-4-carboxamide + L-glutamate + H(+). It catalyses the reaction L-glutamine + H2O = L-glutamate + NH4(+). The protein operates within amino-acid biosynthesis; L-histidine biosynthesis; L-histidine from 5-phospho-alpha-D-ribose 1-diphosphate: step 5/9. IGPS catalyzes the conversion of PRFAR and glutamine to IGP, AICAR and glutamate. The HisH subunit catalyzes the hydrolysis of glutamine to glutamate and ammonia as part of the synthesis of IGP and AICAR. The resulting ammonia molecule is channeled to the active site of HisF. This Sulfolobus acidocaldarius (strain ATCC 33909 / DSM 639 / JCM 8929 / NBRC 15157 / NCIMB 11770) protein is Imidazole glycerol phosphate synthase subunit HisH.